Consider the following 595-residue polypeptide: MQIIEIREPEQADFKQERQIAVGIDFGTTNSLIAIAANRQVKVIKSIDDKELIPTTIDFTSNNFTIGNNKGLRSIKRLFGKTLKEILNTPALFSLVKDYLDVNSSELKLNFANKQLRVPEIAAEIFIYLKNQAEEQLKTNLTKAVITVPAHFNDAARGEVMLAAKIAGFEVLRLIAEPTAAAYAYGLNKNQKGCYLVYDLGGGTFDVSILNIQEGIFQVIATNGDNMLGGNDIDVVITQYLCNKFDLPNSIDTLQLAKKAKETLTYKDSFNNDNVSINKQILEQLILPLVERTINIAQECLEQAGNPNIDGVILVGGATRIPLIKDELYKAFKIDILSDIDPDKAVVWGAALQAENLIAPHTNSLLIDVAPLSLGMELYGGIVEKIIMHNTPIPISVVKEFTTYVDNQTGIQFHILQGEREMAADCRSLARFELKGLPPMKAGYIRAEVTFSIDADGILSVSAYEKISNTSHAIEVKPNHGIDKTEIDIMLENAYKNAKIDYTTRLLQEAVIEAEALIFSIERAIAELTILSSESEISIINSLLDNIKEAVHARDWILINNSIKEFKSKIKKSIDTKFNIIINDLLKGKNINQIK.

This sequence belongs to the heat shock protein 70 family.

Its function is as follows. Chaperone involved in the maturation of iron-sulfur cluster-containing proteins. Has a low intrinsic ATPase activity which is markedly stimulated by HscB. This chain is Chaperone protein HscA homolog, found in Rickettsia conorii (strain ATCC VR-613 / Malish 7).